The primary structure comprises 287 residues: Inorganic pyrophosphatase (287 aa).

Arg80 provides a ligand contact to diphosphate. Mg(2+)-binding residues include Asp117, Asp122, and Asp154.

Belongs to the PPase family. Requires Mg(2+) as cofactor.

The protein resides in the cytoplasm. The enzyme catalyses diphosphate + H2O = 2 phosphate + H(+). This chain is Inorganic pyrophosphatase (IPP1), found in Yarrowia lipolytica (strain CLIB 122 / E 150) (Yeast).